The sequence spans 122 residues: Large ribosomal subunit protein bL12 (122 aa).

It belongs to the bacterial ribosomal protein bL12 family. Homodimer. Part of the ribosomal stalk of the 50S ribosomal subunit. Forms a multimeric L10(L12)X complex, where L10 forms an elongated spine to which 2 to 4 L12 dimers bind in a sequential fashion. Binds GTP-bound translation factors.

Forms part of the ribosomal stalk which helps the ribosome interact with GTP-bound translation factors. Is thus essential for accurate translation. This Levilactobacillus brevis (strain ATCC 367 / BCRC 12310 / CIP 105137 / JCM 1170 / LMG 11437 / NCIMB 947 / NCTC 947) (Lactobacillus brevis) protein is Large ribosomal subunit protein bL12.